Consider the following 485-residue polypeptide: Regulatory protein ViaA (485 aa).

The protein belongs to the ViaA family. Homodimer. Interacts with RavA.

It localises to the cytoplasm. Functionally, component of the RavA-ViaA chaperone complex, which may act on the membrane to optimize the function of some of the respiratory chains. ViaA stimulates the ATPase activity of RavA. In Photorhabdus laumondii subsp. laumondii (strain DSM 15139 / CIP 105565 / TT01) (Photorhabdus luminescens subsp. laumondii), this protein is Regulatory protein ViaA.